A 227-amino-acid chain; its full sequence is Transmembrane emp24 domain-containing protein 4 (227 aa).

The first 29 residues, 1-29 (MAGVGAGPLRAMGRQALLLLALCATGAQG), serve as a signal peptide directing secretion. The Lumenal segment spans residues 30–194 (LYFHIGETEK…RLTSESTNQR (165 aa)). A GOLD domain is found at 39 to 137 (KRCFIEEIPD…KLRVHLDIQV (99 aa)). The N-linked (GlcNAc...) asparagine glycan is linked to N117. Residues 147-176 (IAAKDKLTELQLRARQLLDQVEQIQKEQDY) adopt a coiled-coil conformation. The chain crosses the membrane as a helical span at residues 195–212 (VLWWSIAQTVILILTGIW). Residues 213 to 227 (QMRHLKSFFEAKKLV) are Cytoplasmic-facing. A COPII vesicle coat-binding motif is present at residues 220 to 221 (FF). A COPI vesicle coat-binding motif is present at residues 220–227 (FFEAKKLV).

It belongs to the EMP24/GP25L family.

The protein localises to the endoplasmic reticulum membrane. Its function is as follows. Involved in vesicular protein trafficking, mainly in the early secretory pathway. targeting. Involved in the maintenance of the Golgi apparatus. Appears to play a role in the biosynthesis of secreted cargo including processing. Involved in endoplasmic reticulum stress response. May play a role in the regulation of heat-shock response and apoptosis. This is Transmembrane emp24 domain-containing protein 4 (TMED4) from Homo sapiens (Human).